The chain runs to 371 residues: tRNA/tmRNA (uracil-C(5))-methyltransferase (371 aa).

Positions 194, 223, 228, 244, and 304 each coordinate S-adenosyl-L-methionine. C329 functions as the Nucleophile in the catalytic mechanism. E363 serves as the catalytic Proton acceptor.

This sequence belongs to the class I-like SAM-binding methyltransferase superfamily. RNA M5U methyltransferase family. TrmA subfamily.

The enzyme catalyses uridine(54) in tRNA + S-adenosyl-L-methionine = 5-methyluridine(54) in tRNA + S-adenosyl-L-homocysteine + H(+). It carries out the reaction uridine(341) in tmRNA + S-adenosyl-L-methionine = 5-methyluridine(341) in tmRNA + S-adenosyl-L-homocysteine + H(+). Dual-specificity methyltransferase that catalyzes the formation of 5-methyluridine at position 54 (m5U54) in all tRNAs, and that of position 341 (m5U341) in tmRNA (transfer-mRNA). The polypeptide is tRNA/tmRNA (uracil-C(5))-methyltransferase (Sulfurovum sp. (strain NBC37-1)).